We begin with the raw amino-acid sequence, 1388 residues long: Rho-associated protein kinase 2 (1388 aa).

A disordered region spans residues 1-26 (MSRPPPTGKMPGAPEAAPGDGAGAGR). In terms of domain architecture, Protein kinase spans 92–354 (YDVVKVIGRG…VEEIKQHPFF (263 aa)). ATP contacts are provided by residues 98-106 (IGRGAFGEV) and Lys121. The Proton acceptor role is filled by Asp214. An AGC-kinase C-terminal domain is found at 357-425 (DQWNWDNIRE…FRENLLLSDS (69 aa)). Residues 363–784 (NIRETAAPVV…LNELLKQKDV (422 aa)) are interaction with PPP1R12A. The segment at 373–420 (PELSSDIDSSNFDDIEDDKGDVETFPIPKAFVGNQLPFIGFTYFRENL) is interaction with NPM1. Thr414 is subject to Phosphothreonine; by ROCK2. A coiled-coil region spans residues 439–1131 (SEESQEIQKK…QLQALHIGMD (693 aa)). The region spanning 497 to 573 (TLRQLEREKA…LDEANALLRT (77 aa)) is the REM-1 domain. Basic and acidic residues predominate over residues 512-530 (NAEYQRKADHEADKKRNLE). The disordered stretch occupies residues 512 to 532 (NAEYQRKADHEADKKRNLEND). At Tyr722 the chain carries Phosphotyrosine; by SRC. Residues 979–1047 (TSDVANLANE…LAEIMNRKEP (69 aa)) form the RhoBD domain. The tract at residues 979–1047 (TSDVANLANE…LAEIMNRKEP (69 aa)) is RHOA binding. Ser1137 is subject to Phosphoserine. Positions 1150-1349 (ESRLEGWLSL…WVSRLVKKIP (200 aa)) constitute a PH domain. Phosphothreonine is present on Thr1212. The segment at 1260 to 1315 (GHEFIPTLYHFPTNCEACMKPLWHMFKPPPALECRRCHIKCHKDHMDKKEEIIAPC) adopts a Phorbol-ester/DAG-type zinc-finger fold. Residues 1345 to 1388 (VKKIPKKPPAPDPFARSSPRTSMKIQQNQSIRRPSRQLAPNKPS) form a disordered region. Ser1362 and Ser1374 each carry phosphoserine. The span at 1362 to 1376 (SPRTSMKIQQNQSIR) shows a compositional bias: polar residues.

The protein belongs to the protein kinase superfamily. AGC Ser/Thr protein kinase family. In terms of assembly, homodimer. Interacts with IRS1. Interacts with RAF1. Interacts with RHOA (activated by GTP), RHOB and RHOC. Interacts with PPP1R12A. Interacts with EP300. Interacts with CHORDC1. Interacts with BRCA2. Interacts with NPM1; this interaction enhances ROCK2 activity. Interacts with SORL1. Interacts with PJVK. Mg(2+) serves as cofactor. In terms of processing, autophosphorylated. Phosphorylation at Tyr-722 reduces its binding to RHOA and is crucial for focal adhesion dynamics. Dephosphorylation by PTPN11 stimulates its RHOA binding activity. Cleaved by granzyme B during apoptosis. This leads to constitutive activation of the kinase and membrane blebbing. As to expression, highly expressed in brain, heart, lung, liver, stomach, spleen, kidney, testis, muscle, embryo and placenta. Isoform 2 is expressed predominantly in the skeletal muscle.

It is found in the cytoplasm. Its subcellular location is the cell membrane. The protein resides in the nucleus. It localises to the cytoskeleton. The protein localises to the microtubule organizing center. It is found in the centrosome. It catalyses the reaction L-seryl-[protein] + ATP = O-phospho-L-seryl-[protein] + ADP + H(+). The enzyme catalyses L-threonyl-[protein] + ATP = O-phospho-L-threonyl-[protein] + ADP + H(+). With respect to regulation, activated by RHOA binding. Inhibited by Y-27632. Protein kinase which is a key regulator of actin cytoskeleton and cell polarity. Involved in regulation of smooth muscle contraction, actin cytoskeleton organization, stress fiber and focal adhesion formation, neurite retraction, cell adhesion and motility via phosphorylation of ADD1, BRCA2, CNN1, EZR, DPYSL2, EP300, MSN, MYL9/MLC2, NPM1, RDX, PPP1R12A and VIM. Phosphorylates SORL1 and IRF4. Acts as a negative regulator of VEGF-induced angiogenic endothelial cell activation. Positively regulates the activation of p42/MAPK1-p44/MAPK3 and of p90RSK/RPS6KA1 during myogenic differentiation. Plays an important role in the timely initiation of centrosome duplication. Inhibits keratinocyte terminal differentiation. May regulate closure of the eyelids and ventral body wall through organization of actomyosin bundles. Plays a critical role in the regulation of spine and synaptic properties in the hippocampus. Plays a role in placental homeostasis during the perinatal period. Plays an important role in generating the circadian rhythm of the aortic myofilament Ca(2+) sensitivity and vascular contractility by modulating the myosin light chain phosphorylation. The sequence is that of Rho-associated protein kinase 2 (Rock2) from Mus musculus (Mouse).